A 535-amino-acid polypeptide reads, in one-letter code: MTKYIFVTGGVVSSLGKGITAASLGRLLKNRGLNVTIQKFDPYINVDPGTMSPYQHGEVFVTDDGAETDLDLGHYERFIDINLNKYSNVTTGKIYSSVLQKERRGEYLGGTVQVIPHITNEIKERVYRSGRETNADVVITEIGGTVGDIESLPFLEAIRQIKSDIGRDNVMYIHCTLIPYLKAAGEMKTKPTQHSVKELRSLGIQPNIIVVRTEMPVSQDMKDKLALFCDIDTKAVIEARDADTLYAVPLSLQEQNMDQIVCDHLKLDNPAADMTEWTALVEKVRNLSKKTKIALVGKYVELQDAYISVVEALRHAGYSFDTDVEVKWVNAEHVTAENVQELVGDTDGILVPGGFGDRGVEGKIVAIQYARENKVPFLGICLGMQLASIEFARNVLGLEGANSSEINPDTPYAIIDLLPEQKDVEDLGGTLRLGLYPCKLAEETNAYNAYNEPVVYERHRHRYEFNNQFRPDMEKAGFVFSGTSPDGRLVEIIELKDHPWFVAAQFHPELVSRPNRPQPLFHDFVRASITNKESK.

Positions 1–267 are amidoligase domain; the sequence is MTKYIFVTGG…DQIVCDHLKL (267 aa). Ser-13 contacts CTP. Ser-13 provides a ligand contact to UTP. 14-19 provides a ligand contact to ATP; sequence SLGKGI. Tyr-54 provides a ligand contact to L-glutamine. Asp-71 is a binding site for ATP. 2 residues coordinate Mg(2+): Asp-71 and Glu-141. Residues 148–150, 188–193, and Lys-224 contribute to the CTP site; these read DIE and KTKPTQ. UTP is bound by residues 188–193 and Lys-224; that span reads KTKPTQ. An ATP-binding site is contributed by 240 to 242; the sequence is RDA. Positions 292–534 constitute a Glutamine amidotransferase type-1 domain; the sequence is KIALVGKYVE…VRASITNKES (243 aa). Position 354 (Gly-354) interacts with L-glutamine. Cys-381 (nucleophile; for glutamine hydrolysis) is an active-site residue. Residues 382–385, Glu-405, and Arg-462 each bind L-glutamine; that span reads LGMQ. Catalysis depends on residues His-507 and Glu-509.

It belongs to the CTP synthase family. In terms of assembly, homotetramer.

The catalysed reaction is UTP + L-glutamine + ATP + H2O = CTP + L-glutamate + ADP + phosphate + 2 H(+). It catalyses the reaction L-glutamine + H2O = L-glutamate + NH4(+). The enzyme catalyses UTP + NH4(+) + ATP = CTP + ADP + phosphate + 2 H(+). It functions in the pathway pyrimidine metabolism; CTP biosynthesis via de novo pathway; CTP from UDP: step 2/2. With respect to regulation, allosterically activated by GTP, when glutamine is the substrate; GTP has no effect on the reaction when ammonia is the substrate. The allosteric effector GTP functions by stabilizing the protein conformation that binds the tetrahedral intermediate(s) formed during glutamine hydrolysis. Inhibited by the product CTP, via allosteric rather than competitive inhibition. Functionally, catalyzes the ATP-dependent amination of UTP to CTP with either L-glutamine or ammonia as the source of nitrogen. Regulates intracellular CTP levels through interactions with the four ribonucleotide triphosphates. In Bacillus cereus (strain AH187), this protein is CTP synthase.